Reading from the N-terminus, the 116-residue chain is Large ribosomal subunit protein bL19 (116 aa).

This sequence belongs to the bacterial ribosomal protein bL19 family.

In terms of biological role, this protein is located at the 30S-50S ribosomal subunit interface and may play a role in the structure and function of the aminoacyl-tRNA binding site. The chain is Large ribosomal subunit protein bL19 from Pseudomonas savastanoi pv. phaseolicola (strain 1448A / Race 6) (Pseudomonas syringae pv. phaseolicola (strain 1448A / Race 6)).